Reading from the N-terminus, the 413-residue chain is Calmodulin-binding protein CmbB (413 aa).

6 FNIP repeats span residues 104–148 (FNHP…LSDC), 149–192 (YNQA…LGKG), 222–257 (SLPPNLEFLLLSDAFNHPIEAGMLPPKLKTLTFGDG), 258–301 (FNQP…FHQF), 304–343 (FSQTFENIPSHVQTVEFGYTYNKPITSLPSHLKYIKFSEK), and 344–386 (YNHP…LNGY).

Interacts with calmodulin in the presence of Ca(2+).

The sequence is that of Calmodulin-binding protein CmbB from Dictyostelium discoideum (Social amoeba).